The primary structure comprises 252 residues: Triosephosphate isomerase (252 aa).

10–12 contacts substrate; the sequence is NWK. His-96 acts as the Electrophile in catalysis. The active-site Proton acceptor is Glu-168. Substrate is bound by residues Gly-174, Ser-214, and 235–236; that span reads GG.

This sequence belongs to the triosephosphate isomerase family. Homodimer.

It is found in the cytoplasm. The catalysed reaction is D-glyceraldehyde 3-phosphate = dihydroxyacetone phosphate. It participates in carbohydrate biosynthesis; gluconeogenesis. It functions in the pathway carbohydrate degradation; glycolysis; D-glyceraldehyde 3-phosphate from glycerone phosphate: step 1/1. Involved in the gluconeogenesis. Catalyzes stereospecifically the conversion of dihydroxyacetone phosphate (DHAP) to D-glyceraldehyde-3-phosphate (G3P). This chain is Triosephosphate isomerase, found in Streptococcus pyogenes serotype M1.